We begin with the raw amino-acid sequence, 434 residues long: Nicotinate phosphoribosyltransferase (434 aa).

Phosphohistidine; by autocatalysis is present on His-242.

This sequence belongs to the NAPRTase family. Transiently phosphorylated on a His residue during the reaction cycle. Phosphorylation strongly increases the affinity for substrates and increases the rate of nicotinate D-ribonucleotide production. Dephosphorylation regenerates the low-affinity form of the enzyme, leading to product release.

It catalyses the reaction nicotinate + 5-phospho-alpha-D-ribose 1-diphosphate + ATP + H2O = nicotinate beta-D-ribonucleotide + ADP + phosphate + diphosphate. It participates in cofactor biosynthesis; NAD(+) biosynthesis; nicotinate D-ribonucleotide from nicotinate: step 1/1. Its function is as follows. Catalyzes the synthesis of beta-nicotinate D-ribonucleotide from nicotinate and 5-phospho-D-ribose 1-phosphate at the expense of ATP. This is Nicotinate phosphoribosyltransferase from Bradyrhizobium sp. (strain BTAi1 / ATCC BAA-1182).